Reading from the N-terminus, the 447-residue chain is Maltoporin (447 aa).

The N-terminal stretch at 1-26 (MELRMKKVSVIAAAVAATLAAGSAFA) is a signal peptide.

This sequence belongs to the porin LamB (TC 1.B.3) family. In terms of assembly, homotrimer formed of three 18-stranded antiparallel beta-barrels, containing three independent channels.

Its subcellular location is the cell outer membrane. It carries out the reaction beta-maltose(in) = beta-maltose(out). Functionally, involved in the transport of maltose and maltodextrins. In Vibrio campbellii (strain ATCC BAA-1116), this protein is Maltoporin.